The primary structure comprises 208 residues: Outer-membrane lipoprotein carrier protein (208 aa).

The signal sequence occupies residues 1 to 22 (MKNLLCAVMLTSPLLYSTAVFA).

The protein belongs to the LolA family. Monomer.

Its subcellular location is the periplasm. Participates in the translocation of lipoproteins from the inner membrane to the outer membrane. Only forms a complex with a lipoprotein if the residue after the N-terminal Cys is not an aspartate (The Asp acts as a targeting signal to indicate that the lipoprotein should stay in the inner membrane). The polypeptide is Outer-membrane lipoprotein carrier protein (Shewanella putrefaciens (strain CN-32 / ATCC BAA-453)).